A 154-amino-acid chain; its full sequence is Transcriptional repressor NrdR (154 aa).

Residues 3–34 (CPFCGANDTKVIDSRLVAEGEQVRRRRECLAC) fold into a zinc finger. The 91-residue stretch at 49 to 139 (PRLIKQDGSR…VYRRFQDLNE (91 aa)) folds into the ATP-cone domain.

This sequence belongs to the NrdR family. The cofactor is Zn(2+).

Functionally, negatively regulates transcription of bacterial ribonucleotide reductase nrd genes and operons by binding to NrdR-boxes. The sequence is that of Transcriptional repressor NrdR from Pseudomonas savastanoi pv. phaseolicola (strain 1448A / Race 6) (Pseudomonas syringae pv. phaseolicola (strain 1448A / Race 6)).